We begin with the raw amino-acid sequence, 291 residues long: ATP synthase gamma chain (291 aa).

Belongs to the ATPase gamma chain family. As to quaternary structure, F-type ATPases have 2 components, CF(1) - the catalytic core - and CF(0) - the membrane proton channel. CF(1) has five subunits: alpha(3), beta(3), gamma(1), delta(1), epsilon(1). CF(0) has three main subunits: a, b and c.

It is found in the cell inner membrane. Produces ATP from ADP in the presence of a proton gradient across the membrane. The gamma chain is believed to be important in regulating ATPase activity and the flow of protons through the CF(0) complex. The protein is ATP synthase gamma chain of Burkholderia mallei (strain NCTC 10247).